The sequence spans 436 residues: Alpha-galactosidase mel1 (436 aa).

The signal sequence occupies residues 1–24 (MISISFLNCFFLVFLFLFFSDVHG). A disulfide bond links Cys-45 and Cys-77. The N-linked (GlcNAc...) asparagine glycan is linked to Asn-84. Cysteines 126 and 156 form a disulfide. The active-site Nucleophile is Asp-154. N-linked (GlcNAc...) asparagine glycosylation occurs at Asn-180. Asp-214 serves as the catalytic Proton donor.

The protein belongs to the glycosyl hydrolase 27 family.

It localises to the endoplasmic reticulum lumen. The protein resides in the secreted. The catalysed reaction is Hydrolysis of terminal, non-reducing alpha-D-galactose residues in alpha-D-galactosides, including galactose oligosaccharides, galactomannans and galactolipids.. In terms of biological role, secreted alpha-galactosidase required for catabolic conversion of melibiose to glucose and galactose. This chain is Alpha-galactosidase mel1 (mel1), found in Schizosaccharomyces pombe (strain 972 / ATCC 24843) (Fission yeast).